A 394-amino-acid polypeptide reads, in one-letter code: Actin-related protein 2 (394 aa).

Position 1 is an N-acetylmethionine (M1). Residues 160-162 (GDG) and 214-218 (RMIKE) contribute to the ATP site. Residue K299 is modified to N6-acetyllysine. 305–310 (GGSTMY) serves as a coordination point for ATP. K322 is subject to N6-acetyllysine.

The protein belongs to the actin family. ARP2 subfamily. Component of the Arp2/3 complex composed of ACTR2/ARP2, ACTR3/ARP3, ARPC1B/p41-ARC, ARPC2/p34-ARC, ARPC3/p21-ARC, ARPC4/p20-ARC and ARPC5/p16-ARC. Interacts with AVIL.

Its subcellular location is the cytoplasm. It is found in the cytoskeleton. The protein localises to the cell projection. The protein resides in the nucleus. Its function is as follows. ATP-binding component of the Arp2/3 complex, a multiprotein complex that mediates actin polymerization upon stimulation by nucleation-promoting factor (NPF). The Arp2/3 complex mediates the formation of branched actin networks in the cytoplasm, providing the force for cell motility. Seems to contact the pointed end of the daughter actin filament. In podocytes, required for the formation of lamellipodia downstream of AVIL and PLCE1 regulation. In addition to its role in the cytoplasmic cytoskeleton, the Arp2/3 complex also promotes actin polymerization in the nucleus, thereby regulating gene transcription and repair of damaged DNA. The Arp2/3 complex promotes homologous recombination (HR) repair in response to DNA damage by promoting nuclear actin polymerization, leading to drive motility of double-strand breaks (DSBs). This chain is Actin-related protein 2 (ACTR2), found in Pongo abelii (Sumatran orangutan).